The following is a 59-amino-acid chain: Small integral membrane protein 30 (59 aa).

The first 24 residues, 1 to 24 (MTSVSTQLSLVLMSLLLVLPVVEA), serve as a signal peptide directing secretion. Topologically, residues 25–29 (VEAGD) are extracellular. The helical transmembrane segment at 30 to 50 (AIALLLGVVLSITGICACLGV) threads the bilayer. Residues 51–59 (YARKRNGQM) are Cytoplasmic-facing.

In terms of assembly, interacts (via transmembrane domain) with antiviral protein MAVS (via transmembrane domain); the interaction disrupts MAVS interaction with RIGI and inhibits MAVS aggregation, resulting in the repression of type I interferon signaling and innate immune responses.

Its subcellular location is the endoplasmic reticulum membrane. The protein localises to the mitochondrion membrane. In terms of biological role, negatively regulates antiviral innate immune responses. Disrupts the interaction of antiviral protein MAVS with innate immune receptor RIGI and inhibits MAVS aggregation, resulting in the repression of type I interferon signaling and innate immune responses. This is Small integral membrane protein 30 from Homo sapiens (Human).